Here is a 496-residue protein sequence, read N- to C-terminus: Beta-amylase (496 aa).

Residues Asp-54, His-94, and Asp-102 each coordinate substrate. Glu-187 functions as the Proton donor in the catalytic mechanism. The substrate site is built by Lys-296, His-301, and Thr-343. Glu-381 serves as the catalytic Proton acceptor. Residues 382–383 and Arg-421 each bind substrate; that span reads NA.

It belongs to the glycosyl hydrolase 14 family.

The enzyme catalyses Hydrolysis of (1-&gt;4)-alpha-D-glucosidic linkages in polysaccharides so as to remove successive maltose units from the non-reducing ends of the chains.. The protein is Beta-amylase (BMY1) of Trifolium repens (Creeping white clover).